A 232-amino-acid chain; its full sequence is MIPTSFPPREEIARLTARMLLEIQAVHFRPHEPFTLASGLPSPTYIDCRKLISYPRIRATLMDFLTVTLLRDAGFEAFDNVAGGETAGIPFAAMMAERLALPMTYVRKKPKGYGRNARIEGVMTEGQRVLLVEDLTTDGGSKLSFVDAIRDTGATCAHTAVIFYYGIFPETIGRLQAHGVTLHHLCTWWDVLAEARASDAFDAGTLAEVECFLSNPRDWQDARKPADPAAGL.

5-phospho-alpha-D-ribose 1-diphosphate is bound by residues Arg107, Lys108, Lys111, and 133–141 (EDLTTDGGS). Residue Thr137 coordinates orotate.

The protein belongs to the purine/pyrimidine phosphoribosyltransferase family. PyrE subfamily. As to quaternary structure, homodimer. It depends on Mg(2+) as a cofactor.

It carries out the reaction orotidine 5'-phosphate + diphosphate = orotate + 5-phospho-alpha-D-ribose 1-diphosphate. It functions in the pathway pyrimidine metabolism; UMP biosynthesis via de novo pathway; UMP from orotate: step 1/2. Its function is as follows. Catalyzes the transfer of a ribosyl phosphate group from 5-phosphoribose 1-diphosphate to orotate, leading to the formation of orotidine monophosphate (OMP). The polypeptide is Orotate phosphoribosyltransferase (Cereibacter sphaeroides (strain ATCC 17025 / ATH 2.4.3) (Rhodobacter sphaeroides)).